We begin with the raw amino-acid sequence, 176 residues long: Large ribosomal subunit protein uL6 (176 aa).

Belongs to the universal ribosomal protein uL6 family. As to quaternary structure, part of the 50S ribosomal subunit.

Functionally, this protein binds to the 23S rRNA, and is important in its secondary structure. It is located near the subunit interface in the base of the L7/L12 stalk, and near the tRNA binding site of the peptidyltransferase center. This Burkholderia ambifaria (strain ATCC BAA-244 / DSM 16087 / CCUG 44356 / LMG 19182 / AMMD) (Burkholderia cepacia (strain AMMD)) protein is Large ribosomal subunit protein uL6.